Reading from the N-terminus, the 45-residue chain is U1-ctenitoxin-Pk1a (45 aa).

Intrachain disulfides connect C3/C16, C10/C25, C15/C34, and C27/C32.

Expressed by the venom gland.

It is found in the secreted. Functionally, neurotoxin. Causes rapid general flaccid paralysis and death in mice at dose levels of 5 ug per mouse. The protein is U1-ctenitoxin-Pk1a of Phoneutria keyserlingi (Brazilian wandering spider).